The following is a 258-amino-acid chain: Thiazole synthase (258 aa).

Catalysis depends on Lys-100, which acts as the Schiff-base intermediate with DXP. Residues Gly-161, 187–188 (AG), and 209–210 (NT) contribute to the 1-deoxy-D-xylulose 5-phosphate site.

The protein belongs to the ThiG family. As to quaternary structure, homotetramer. Forms heterodimers with either ThiH or ThiS.

Its subcellular location is the cytoplasm. The enzyme catalyses [ThiS sulfur-carrier protein]-C-terminal-Gly-aminoethanethioate + 2-iminoacetate + 1-deoxy-D-xylulose 5-phosphate = [ThiS sulfur-carrier protein]-C-terminal Gly-Gly + 2-[(2R,5Z)-2-carboxy-4-methylthiazol-5(2H)-ylidene]ethyl phosphate + 2 H2O + H(+). The protein operates within cofactor biosynthesis; thiamine diphosphate biosynthesis. Its function is as follows. Catalyzes the rearrangement of 1-deoxy-D-xylulose 5-phosphate (DXP) to produce the thiazole phosphate moiety of thiamine. Sulfur is provided by the thiocarboxylate moiety of the carrier protein ThiS. In vitro, sulfur can be provided by H(2)S. The sequence is that of Thiazole synthase from Campylobacter jejuni subsp. doylei (strain ATCC BAA-1458 / RM4099 / 269.97).